The chain runs to 310 residues: uncharacterized protein (310 aa).

The 58-residue stretch at 5–62 (FTEENLLAFTTAARFGSFSKAAEELGLTTSAISYTIKRMETGLDVVLFTRSTRSIELT) folds into the HTH lysR-type domain. A DNA-binding region (H-T-H motif) is located at residues 22–42 (FSKAAEELGLTTSAISYTIKR).

Belongs to the LysR transcriptional regulatory family.

This is an uncharacterized protein from Escherichia coli (strain K12).